The following is a 118-amino-acid chain: KLAAVAVATLLAAGFGVTTAGSASAATSPSQLCGGYSTSEPMLSQDDSGDAVKALQCELYNSLAYMGPDVDGYFGPKTLAAVQKFQTCTGLKPDGIVGPLTWAKLDYQSSQGTTPVWC.

This is an uncharacterized protein from Kitasatospora aureofaciens (Streptomyces aureofaciens).